Here is a 309-residue protein sequence, read N- to C-terminus: Aspartate carbamoyltransferase catalytic subunit (309 aa).

Residues arginine 55 and threonine 56 each contribute to the carbamoyl phosphate site. An L-aspartate-binding site is contributed by lysine 85. Carbamoyl phosphate is bound by residues arginine 106, histidine 135, and glutamine 138. Arginine 168 and arginine 230 together coordinate L-aspartate. Carbamoyl phosphate contacts are provided by leucine 268 and proline 269.

The protein belongs to the aspartate/ornithine carbamoyltransferase superfamily. ATCase family. In terms of assembly, heterododecamer (2C3:3R2) of six catalytic PyrB chains organized as two trimers (C3), and six regulatory PyrI chains organized as three dimers (R2).

The catalysed reaction is carbamoyl phosphate + L-aspartate = N-carbamoyl-L-aspartate + phosphate + H(+). The protein operates within pyrimidine metabolism; UMP biosynthesis via de novo pathway; (S)-dihydroorotate from bicarbonate: step 2/3. Catalyzes the condensation of carbamoyl phosphate and aspartate to form carbamoyl aspartate and inorganic phosphate, the committed step in the de novo pyrimidine nucleotide biosynthesis pathway. The protein is Aspartate carbamoyltransferase catalytic subunit of Vibrio cholerae serotype O1 (strain ATCC 39541 / Classical Ogawa 395 / O395).